The sequence spans 472 residues: Argininosuccinate lyase (472 aa).

It belongs to the lyase 1 family. Argininosuccinate lyase subfamily.

Its subcellular location is the cytoplasm. The enzyme catalyses 2-(N(omega)-L-arginino)succinate = fumarate + L-arginine. It participates in amino-acid biosynthesis; L-arginine biosynthesis; L-arginine from L-ornithine and carbamoyl phosphate: step 3/3. This chain is Argininosuccinate lyase, found in Mycobacterium avium (strain 104).